Reading from the N-terminus, the 578-residue chain is Lysine--tRNA ligase (578 aa).

2 residues coordinate Mg(2+): glutamate 414 and glutamate 421.

The protein belongs to the class-II aminoacyl-tRNA synthetase family. As to quaternary structure, homodimer. Mg(2+) is required as a cofactor.

It is found in the cytoplasm. The catalysed reaction is tRNA(Lys) + L-lysine + ATP = L-lysyl-tRNA(Lys) + AMP + diphosphate. This chain is Lysine--tRNA ligase, found in Porphyromonas gingivalis (strain ATCC BAA-308 / W83).